The primary structure comprises 197 residues: Thymidylate kinase (197 aa).

Position 7 to 14 (7 to 14 (GIDGSGKS)) interacts with ATP.

It belongs to the thymidylate kinase family.

The catalysed reaction is dTMP + ATP = dTDP + ADP. Functionally, phosphorylation of dTMP to form dTDP in both de novo and salvage pathways of dTTP synthesis. The polypeptide is Thymidylate kinase (Thermotoga petrophila (strain ATCC BAA-488 / DSM 13995 / JCM 10881 / RKU-1)).